The sequence spans 106 residues: Toxin-like structure LSTX-D3 (106 aa).

Residues 1-20 (MMKVLVVVALLVTLISYSSS) form the signal peptide. The propeptide occupies 21-41 (EGIDDLEADELLSLMANEQTR). 4 disulfide bridges follow: cysteine 45–cysteine 60, cysteine 52–cysteine 69, cysteine 59–cysteine 85, and cysteine 71–cysteine 83.

The protein belongs to the neurotoxin 19 (CSTX) family. 02 (D7) subfamily. In terms of tissue distribution, expressed by the venom gland.

The protein localises to the secreted. The chain is Toxin-like structure LSTX-D3 from Lycosa singoriensis (Wolf spider).